The following is a 67-amino-acid chain: Large ribosomal subunit protein uL29 (67 aa).

The protein belongs to the universal ribosomal protein uL29 family.

This chain is Large ribosomal subunit protein uL29, found in Sulfurihydrogenibium sp. (strain YO3AOP1).